The chain runs to 178 residues: MDSQGPIILEKSIKIEEVIKIANTSIIDIVTKTVTPEIKAPYELVDVEYDKMGSDYILSILVDKEGGITVEDTSDLTNIISPLLDTIDPDPFPNQYMLEVSSPGLERPLKTADSLKAAVGSYINVSLYQAIDKVKVFQGDLLAFDGETLTIDYLDKTRHKIVNIPYQAVAKVRMAVKL.

Belongs to the RimP family.

It localises to the cytoplasm. In terms of biological role, required for maturation of 30S ribosomal subunits. In Streptococcus pyogenes serotype M1, this protein is Ribosome maturation factor RimP.